The sequence spans 197 residues: Adenylyl-sulfate kinase (197 aa).

Glycine 33 to serine 40 serves as a coordination point for ATP. The active-site Phosphoserine intermediate is serine 107.

The protein belongs to the APS kinase family.

It carries out the reaction adenosine 5'-phosphosulfate + ATP = 3'-phosphoadenylyl sulfate + ADP + H(+). It functions in the pathway sulfur metabolism; hydrogen sulfide biosynthesis; sulfite from sulfate: step 2/3. Functionally, catalyzes the synthesis of activated sulfate. The sequence is that of Adenylyl-sulfate kinase from Bacillus licheniformis (strain ATCC 14580 / DSM 13 / JCM 2505 / CCUG 7422 / NBRC 12200 / NCIMB 9375 / NCTC 10341 / NRRL NRS-1264 / Gibson 46).